A 229-amino-acid polypeptide reads, in one-letter code: UPF0173 metal-dependent hydrolase SSP1060 (229 aa).

The protein belongs to the UPF0173 family.

This chain is UPF0173 metal-dependent hydrolase SSP1060, found in Staphylococcus saprophyticus subsp. saprophyticus (strain ATCC 15305 / DSM 20229 / NCIMB 8711 / NCTC 7292 / S-41).